The chain runs to 188 residues: Threonylcarbamoyl-AMP synthase (188 aa).

The 186-residue stretch at 3-188 (QLHPSDIKDI…RSGKILRNGQ (186 aa)) folds into the YrdC-like domain.

This sequence belongs to the SUA5 family. TsaC subfamily.

Its subcellular location is the cytoplasm. The enzyme catalyses L-threonine + hydrogencarbonate + ATP = L-threonylcarbamoyladenylate + diphosphate + H2O. In terms of biological role, required for the formation of a threonylcarbamoyl group on adenosine at position 37 (t(6)A37) in tRNAs that read codons beginning with adenine. Catalyzes the conversion of L-threonine, HCO(3)(-)/CO(2) and ATP to give threonylcarbamoyl-AMP (TC-AMP) as the acyladenylate intermediate, with the release of diphosphate. The protein is Threonylcarbamoyl-AMP synthase of Shewanella baltica (strain OS195).